The chain runs to 290 residues: Nucleoid occlusion protein (290 aa).

Residues 153 to 172 (EALAQRLGKGQSTIANKLRL) constitute a DNA-binding region (H-T-H motif).

Belongs to the ParB family.

Its subcellular location is the cytoplasm. It localises to the nucleoid. Functionally, effects nucleoid occlusion by binding relatively nonspecifically to DNA and preventing the assembly of the division machinery in the vicinity of the nucleoid, especially under conditions that disturb the cell cycle. It helps to coordinate cell division and chromosome segregation by preventing the formation of the Z ring through the nucleoid, which would cause chromosome breakage. This is Nucleoid occlusion protein from Bacillus cytotoxicus (strain DSM 22905 / CIP 110041 / 391-98 / NVH 391-98).